A 30-amino-acid polypeptide reads, in one-letter code: MTVKIAQKKVLPVIGRAAALCGSCYPCSCM.

A propeptide spanning residues 1–19 (MTVKIAQKKVLPVIGRAAA) is cleaved from the precursor. Residues 20–21 (LC) constitute a cross-link (2-(3-methylbutanoyl)-5-hydroxyoxazole-4-carbothionic acid (Leu-Cys)). The Cu(2+) site is built by cysteine 21 and cysteine 27. Cysteine 24 and cysteine 29 are joined by a disulfide. Positions 26–27 (PC) form a cross-link, proline 5-hydroxy-oxazole-4-carbothionic acid (Pro-Cys).

In terms of assembly, monomer. In the absence of copper, may exist as a dimer or an oligomer.

It localises to the secreted. It is found in the cytoplasm. The catalysed reaction is 2 superoxide + 2 H(+) = H2O2 + O2. In terms of biological role, chalkophore involved in scavenging, uptake and suppression of toxicity of copper. Each apo-methanobactin (apo-mb) complexes 1 Cu(2+) or Cu(1+) ion to form Cu(1+)-mb (Cu-mb) which is then taken up by the cell. Enhances growth rate in the presence of copper and reduces growth lag upon exposition to elevated levels of copper. Cu-mb contributes to the switchover from soluble methane monooxygenase (sMMO) to the membrane-bound particulate MMO (pMMO) by inducing transcription of pMMO subunit A. It also stimulates the enzymatic activity of pMMO. In the absence of copper, binds other metal ions, like Zn(2+), Ag(1+), Au(3+), Co(2+), Cd(2+), Fe(3+), Hg(2+), Mn(2+), Ni(2+), Pb(2+) or U(6+), but not Ba(2+), Ca(2+), La(2+), Mg(2+) or Sr(2+). Uptake is an active process, which may involve TonB-dependent transporters, and as such does not involve porins. Cu-Mb can be taken up by other methanotrophic bacteria but not by E.coli. Has Cu-dependent superoxide dismutase-like activity. Shows reductant-dependent oxidase and hydrogen peroxide reductase activities. Reduces copper-levels in liver in a rat model of Wilson disease. This is Methanobactin mb-OB3b from Methylosinus trichosporium.